A 144-amino-acid chain; its full sequence is Prefoldin subunit alpha (144 aa).

The protein belongs to the prefoldin subunit alpha family. Heterohexamer of two alpha and four beta subunits.

The protein localises to the cytoplasm. Molecular chaperone capable of stabilizing a range of proteins. Seems to fulfill an ATP-independent, HSP70-like function in archaeal de novo protein folding. In Methanococcus maripaludis (strain DSM 14266 / JCM 13030 / NBRC 101832 / S2 / LL), this protein is Prefoldin subunit alpha.